Reading from the N-terminus, the 462-residue chain is Chitinase 1 (462 aa).

The first 17 residues, 1 to 17, serve as a signal peptide directing secretion; the sequence is MILNLIILLAISIVASA. The 274-residue stretch at 18–291 folds into the GH18 domain; it reads SNIAAYWGQN…NQLHQALSGS (274 aa). Asn-57 carries N-linked (GlcNAc...) asparagine glycosylation. The active-site Proton donor is the Glu-147.

This sequence belongs to the glycosyl hydrolase 18 family. Chitinase class V subfamily.

The protein localises to the secreted. It catalyses the reaction Random endo-hydrolysis of N-acetyl-beta-D-glucosaminide (1-&gt;4)-beta-linkages in chitin and chitodextrins.. Its function is as follows. Chitinase involved in the remodeling of chitin in the fungal cell wall. Plays a role in cell separation. This is Chitinase 1 (CHT1) from Candida albicans (strain SC5314 / ATCC MYA-2876) (Yeast).